The sequence spans 464 residues: 3-isopropylmalate dehydratase large subunit (464 aa).

[4Fe-4S] cluster contacts are provided by Cys337, Cys397, and Cys400.

Belongs to the aconitase/IPM isomerase family. LeuC type 1 subfamily. In terms of assembly, heterodimer of LeuC and LeuD. [4Fe-4S] cluster is required as a cofactor.

It catalyses the reaction (2R,3S)-3-isopropylmalate = (2S)-2-isopropylmalate. The protein operates within amino-acid biosynthesis; L-leucine biosynthesis; L-leucine from 3-methyl-2-oxobutanoate: step 2/4. Functionally, catalyzes the isomerization between 2-isopropylmalate and 3-isopropylmalate, via the formation of 2-isopropylmaleate. This is 3-isopropylmalate dehydratase large subunit from Bacillus cereus (strain ZK / E33L).